An 80-amino-acid polypeptide reads, in one-letter code: Large ribosomal subunit protein bL31B (80 aa).

The protein belongs to the bacterial ribosomal protein bL31 family. Type B subfamily. In terms of assembly, part of the 50S ribosomal subunit.

This chain is Large ribosomal subunit protein bL31B, found in Xanthomonas campestris pv. campestris (strain 8004).